Reading from the N-terminus, the 80-residue chain is Photosystem II extrinsic protein V (80 aa).

Residue Met-47 participates in heme binding.

Belongs to the cytochrome c family. PsbV subfamily. In terms of assembly, PSII is composed of 1 copy each of membrane proteins PsbA, PsbB, PsbC, PsbD, PsbE, PsbF, PsbH, PsbI, PsbJ, PsbK, PsbL, PsbM, PsbT, PsbY, PsbZ, Psb30/Ycf12, at least 3 peripheral proteins of the oxygen-evolving complex and a large number of cofactors. It forms dimeric complexes. It depends on heme as a cofactor.

The protein resides in the plastid. The protein localises to the chloroplast thylakoid membrane. In terms of biological role, one of the extrinsic, lumenal subunits of photosystem II (PSII). PSII is a light-driven water plastoquinone oxidoreductase, using light energy to abstract electrons from H(2)O, generating a proton gradient subsequently used for ATP formation. The extrinsic proteins stabilize the structure of photosystem II oxygen-evolving complex (OEC), the ion environment of oxygen evolution and protect the OEC against heat-induced inactivation. This is Photosystem II extrinsic protein V from Thalassiosira weissflogii (Marine diatom).